The sequence spans 267 residues: WUSCHEL-related homeobox 8 (267 aa).

The homeobox; WUS-type DNA-binding region spans 88 to 152; that stretch reads TARQRWTPTP…NRRARSKRKQ (65 aa). Residues 148–195 are disordered; sequence SKRKQAALPNNNAESEAEADEESPTDKKPKSDRPLHQNIAMRDHNSER. Over residues 171–195 the composition is skewed to basic and acidic residues; that stretch reads PTDKKPKSDRPLHQNIAMRDHNSER.

It belongs to the WUS homeobox family.

It localises to the nucleus. Functionally, transcription factor which may be involved in developmental processes. In Oryza sativa subsp. japonica (Rice), this protein is WUSCHEL-related homeobox 8 (WOX8).